The primary structure comprises 309 residues: tRNA dimethylallyltransferase (309 aa).

10 to 17 (GPTAVGKT) serves as a coordination point for ATP. 12–17 (TAVGKT) contributes to the substrate binding site. An interaction with substrate tRNA region spans residues 35–38 (DSMQ).

Belongs to the IPP transferase family. Monomer. Mg(2+) serves as cofactor.

It carries out the reaction adenosine(37) in tRNA + dimethylallyl diphosphate = N(6)-dimethylallyladenosine(37) in tRNA + diphosphate. Functionally, catalyzes the transfer of a dimethylallyl group onto the adenine at position 37 in tRNAs that read codons beginning with uridine, leading to the formation of N6-(dimethylallyl)adenosine (i(6)A). This Clostridium botulinum (strain Eklund 17B / Type B) protein is tRNA dimethylallyltransferase.